The sequence spans 701 residues: Elongation factor G 1 (701 aa).

Residues Val8 to Thr290 enclose the tr-type G domain. GTP-binding positions include Ala17–Thr24, Asp88–His92, and Asn142–Asp145.

Belongs to the TRAFAC class translation factor GTPase superfamily. Classic translation factor GTPase family. EF-G/EF-2 subfamily.

Its subcellular location is the cytoplasm. Functionally, catalyzes the GTP-dependent ribosomal translocation step during translation elongation. During this step, the ribosome changes from the pre-translocational (PRE) to the post-translocational (POST) state as the newly formed A-site-bound peptidyl-tRNA and P-site-bound deacylated tRNA move to the P and E sites, respectively. Catalyzes the coordinated movement of the two tRNA molecules, the mRNA and conformational changes in the ribosome. The chain is Elongation factor G 1 from Saccharophagus degradans (strain 2-40 / ATCC 43961 / DSM 17024).